Consider the following 118-residue polypeptide: Small ribosomal subunit protein uS13 (118 aa).

A disordered region spans residues 94 to 118 (SLPLRGQRTKTNARTRKGPRKPIKK).

This sequence belongs to the universal ribosomal protein uS13 family. Part of the 30S ribosomal subunit. Forms a loose heterodimer with protein S19. Forms two bridges to the 50S subunit in the 70S ribosome.

Located at the top of the head of the 30S subunit, it contacts several helices of the 16S rRNA. In the 70S ribosome it contacts the 23S rRNA (bridge B1a) and protein L5 of the 50S subunit (bridge B1b), connecting the 2 subunits; these bridges are implicated in subunit movement. Contacts the tRNAs in the A and P-sites. The protein is Small ribosomal subunit protein uS13 of Shewanella oneidensis (strain ATCC 700550 / JCM 31522 / CIP 106686 / LMG 19005 / NCIMB 14063 / MR-1).